The chain runs to 198 residues: MKETPIMILSGQDIQSRLGKDIVIDPFDPSRLSPNSYNLTLHDELLVYEEVVLDAASPNRYRRLPIPEEGLTLQPGTLYLGRTTEHTETHGLVPIIQGRSSLGRLGLFLNPGGSLGHAGYRGTWTLELHCVQPVRIYPHIQICQITYWEVSGDSPEEASEKYQNSNDIQPSLMHRELGYDDRDTQLELGFDEAIRSTP.

DCTP contacts are provided by residues 99 to 104, 125 to 127, and Q144; these read RSSLGR and TLE. The active-site Proton donor/acceptor is E127.

The protein belongs to the dCTP deaminase family. Homotrimer.

It catalyses the reaction dCTP + H2O + H(+) = dUTP + NH4(+). It participates in pyrimidine metabolism; dUMP biosynthesis; dUMP from dCTP (dUTP route): step 1/2. Its function is as follows. Catalyzes the deamination of dCTP to dUTP. The sequence is that of dCTP deaminase from Rhodopirellula baltica (strain DSM 10527 / NCIMB 13988 / SH1).